The sequence spans 130 residues: Iron-sulfur cluster insertion protein ErpA (130 aa).

The iron-sulfur cluster site is built by cysteine 46, cysteine 116, and cysteine 118.

It belongs to the HesB/IscA family. As to quaternary structure, homodimer. Iron-sulfur cluster serves as cofactor.

Its function is as follows. Required for insertion of 4Fe-4S clusters for at least IspG. This is Iron-sulfur cluster insertion protein ErpA from Legionella pneumophila subsp. pneumophila (strain Philadelphia 1 / ATCC 33152 / DSM 7513).